A 307-amino-acid chain; its full sequence is Ribosomal RNA small subunit methyltransferase H (307 aa).

Residues 32–34, Asp-52, Phe-78, Asp-100, and Gln-107 each bind S-adenosyl-L-methionine; that span reads GGH.

It belongs to the methyltransferase superfamily. RsmH family.

The protein resides in the cytoplasm. The catalysed reaction is cytidine(1402) in 16S rRNA + S-adenosyl-L-methionine = N(4)-methylcytidine(1402) in 16S rRNA + S-adenosyl-L-homocysteine + H(+). Specifically methylates the N4 position of cytidine in position 1402 (C1402) of 16S rRNA. The protein is Ribosomal RNA small subunit methyltransferase H of Coxiella burnetii (strain CbuG_Q212) (Coxiella burnetii (strain Q212)).